Reading from the N-terminus, the 764-residue chain is Probable glutamate--tRNA ligase, cytoplasmic (764 aa).

228–230 lines the L-glutamate pocket; sequence RFP. The 'HIGH' region motif lies at 233–242; sequence PSGYMHIGHC. H238 lines the ATP pocket. L-glutamate-binding positions include D264, 404–408, and R422; that span reads YDFAC. Residues E425 and 460-464 each bind ATP; that span reads LLSKR. The 'KMSKS' region motif lies at 460 to 464; the sequence is LLSKR.

It belongs to the class-I aminoacyl-tRNA synthetase family. Glutamate--tRNA ligase type 2 subfamily.

The protein resides in the cytoplasm. It carries out the reaction tRNA(Glu) + L-glutamate + ATP = L-glutamyl-tRNA(Glu) + AMP + diphosphate. In terms of biological role, catalyzes the attachment of glutamate to tRNA(Glu) in a two-step reaction: glutamate is first activated by ATP to form Glu-AMP and then transferred to the acceptor end of tRNA(Glu). The sequence is that of Probable glutamate--tRNA ligase, cytoplasmic (gluS) from Dictyostelium discoideum (Social amoeba).